A 255-amino-acid polypeptide reads, in one-letter code: Probable iron chelatin transport ATP-binding protein HP_0888 (255 aa).

Positions 3-240 constitute an ABC transporter domain; sequence LEVKNLSFKY…HNLSALYDTP (238 aa). Residue 35 to 42 participates in ATP binding; the sequence is APNGSGKT.

The protein belongs to the ABC transporter superfamily.

The protein localises to the cell inner membrane. Part of a binding-protein-dependent transport system for an iron chelatin. Probably responsible for energy coupling to the transport system (Potential). The sequence is that of Probable iron chelatin transport ATP-binding protein HP_0888 from Helicobacter pylori (strain ATCC 700392 / 26695) (Campylobacter pylori).